Consider the following 813-residue polypeptide: Leucine--tRNA ligase (813 aa).

The 'HIGH' region signature appears at Pro42 to His52. The short motif at Lys580 to Ser584 is the 'KMSKS' region element. An ATP-binding site is contributed by Lys583.

It belongs to the class-I aminoacyl-tRNA synthetase family.

It localises to the cytoplasm. The enzyme catalyses tRNA(Leu) + L-leucine + ATP = L-leucyl-tRNA(Leu) + AMP + diphosphate. This is Leucine--tRNA ligase from Dehalococcoides mccartyi (strain CBDB1).